The chain runs to 174 residues: MASRGVNKVILVGNLGQDPEVRYMPSGGAVANFTLATSESWRDKQTGEMKEQTEWHRVVLFGKLAEVAGEYLRKGSQVYIEGQLRTRKWTDQSGQDKYTTEVVVNVGGTMQMLGGRQGGGAPAGGGQQQGGWGQPQQPQGGNQFSGGAQSRPQQQAPAAPSNEPPMDFDDDIPF.

One can recognise an SSB domain in the interval valine 6–glutamine 111. A DNA-binding region spans residues tryptophan 55–phenylalanine 61. Positions methionine 110–phenylalanine 174 are disordered. A compositionally biased stretch (gly residues) spans glycine 115–glycine 133. Residues glutamine 134 to proline 160 show a composition bias toward low complexity. The short motif at aspartate 169–phenylalanine 174 is the Important for interaction with partner proteins element.

As to quaternary structure, homotetramer. Binds PriA via its C-terminus.

Functionally, plays an important role in DNA replication, recombination and repair. Binds to ssDNA and to an array of partner proteins to recruit them to their sites of action during DNA metabolism. Stimulates the ATPase activity of PriA. One tetramer binds to 26 nucleotides (nt) of ssDNA, a 55 nt piece of ssDNA probably binds 2 tetramers. This is Single-stranded DNA-binding protein 1 from Klebsiella pneumoniae subsp. pneumoniae (strain ATCC 700721 / MGH 78578).